Consider the following 400-residue polypeptide: Formate-dependent phosphoribosylglycinamide formyltransferase (400 aa).

Residues 22 to 23 and glutamate 82 each bind N(1)-(5-phospho-beta-D-ribosyl)glycinamide; that span reads EL. Residues arginine 115, lysine 156, 161–166, 196–199, and glutamate 204 each bind ATP; these read SSGKGQ and EGFI. An ATP-grasp domain is found at 120–309; the sequence is RLAAETLGLP…EFALHARAIL (190 aa). Glutamate 268 and glutamate 280 together coordinate Mg(2+). Residues aspartate 287, lysine 361, and 368–369 contribute to the N(1)-(5-phospho-beta-D-ribosyl)glycinamide site; that span reads RR.

The protein belongs to the PurK/PurT family. As to quaternary structure, homodimer.

The catalysed reaction is N(1)-(5-phospho-beta-D-ribosyl)glycinamide + formate + ATP = N(2)-formyl-N(1)-(5-phospho-beta-D-ribosyl)glycinamide + ADP + phosphate + H(+). It participates in purine metabolism; IMP biosynthesis via de novo pathway; N(2)-formyl-N(1)-(5-phospho-D-ribosyl)glycinamide from N(1)-(5-phospho-D-ribosyl)glycinamide (formate route): step 1/1. Involved in the de novo purine biosynthesis. Catalyzes the transfer of formate to 5-phospho-ribosyl-glycinamide (GAR), producing 5-phospho-ribosyl-N-formylglycinamide (FGAR). Formate is provided by PurU via hydrolysis of 10-formyl-tetrahydrofolate. This chain is Formate-dependent phosphoribosylglycinamide formyltransferase, found in Xanthomonas oryzae pv. oryzae (strain KACC10331 / KXO85).